Here is a 612-residue protein sequence, read N- to C-terminus: Dihydroxy-acid dehydratase (612 aa).

D81 contacts Mg(2+). A [2Fe-2S] cluster-binding site is contributed by C122. The Mg(2+) site is built by D123 and K124. An N6-carboxylysine modification is found at K124. C195 serves as a coordination point for [2Fe-2S] cluster. E491 is a binding site for Mg(2+). The active-site Proton acceptor is S517.

Belongs to the IlvD/Edd family. In terms of assembly, homodimer. [2Fe-2S] cluster serves as cofactor. Mg(2+) is required as a cofactor.

The catalysed reaction is (2R)-2,3-dihydroxy-3-methylbutanoate = 3-methyl-2-oxobutanoate + H2O. The enzyme catalyses (2R,3R)-2,3-dihydroxy-3-methylpentanoate = (S)-3-methyl-2-oxopentanoate + H2O. It functions in the pathway amino-acid biosynthesis; L-isoleucine biosynthesis; L-isoleucine from 2-oxobutanoate: step 3/4. It participates in amino-acid biosynthesis; L-valine biosynthesis; L-valine from pyruvate: step 3/4. Functions in the biosynthesis of branched-chain amino acids. Catalyzes the dehydration of (2R,3R)-2,3-dihydroxy-3-methylpentanoate (2,3-dihydroxy-3-methylvalerate) into 2-oxo-3-methylpentanoate (2-oxo-3-methylvalerate) and of (2R)-2,3-dihydroxy-3-methylbutanoate (2,3-dihydroxyisovalerate) into 2-oxo-3-methylbutanoate (2-oxoisovalerate), the penultimate precursor to L-isoleucine and L-valine, respectively. The polypeptide is Dihydroxy-acid dehydratase (Bartonella henselae (strain ATCC 49882 / DSM 28221 / CCUG 30454 / Houston 1) (Rochalimaea henselae)).